Reading from the N-terminus, the 233-residue chain is Pathogenesis-related thaumatin-like protein 3.2 (233 aa).

The signal sequence occupies residues 1–22 (MARAMHTVWIALVPTLFVFLQG). 8 cysteine pairs are disulfide-bonded: C36–C232, C77–C87, C92–C98, C145–C221, C151–C204, C159–C169, C173–C182, and C183–C191. An N-linked (GlcNAc...) asparagine glycan is attached at N195.

It belongs to the thaumatin family. Strongly expressed in roots and in female and male strobili, and, to a lower extent, in cotyledons, leaves, stems and pollen grains.

May be involved in disease resistance. In Cryptomeria japonica (Japanese cedar), this protein is Pathogenesis-related thaumatin-like protein 3.2.